Reading from the N-terminus, the 349-residue chain is Adenine deaminase (349 aa).

Residues His24, His26, and His204 each contribute to the Zn(2+) site. The active-site Proton donor is the Glu207. Asp285 provides a ligand contact to Zn(2+). A substrate-binding site is contributed by Asp286.

This sequence belongs to the metallo-dependent hydrolases superfamily. Adenosine and AMP deaminases family. Adenine deaminase type 2 subfamily. It depends on Zn(2+) as a cofactor.

It catalyses the reaction adenine + H2O + H(+) = hypoxanthine + NH4(+). In terms of biological role, catalyzes the hydrolytic deamination of adenine to hypoxanthine. Plays an important role in the purine salvage pathway and in nitrogen catabolism. The polypeptide is Adenine deaminase (Trichlorobacter lovleyi (strain ATCC BAA-1151 / DSM 17278 / SZ) (Geobacter lovleyi)).